A 142-amino-acid polypeptide reads, in one-letter code: Putative pre-16S rRNA nuclease (142 aa).

This sequence belongs to the YqgF nuclease family.

The protein localises to the cytoplasm. Functionally, could be a nuclease involved in processing of the 5'-end of pre-16S rRNA. The polypeptide is Putative pre-16S rRNA nuclease (Chlorobaculum tepidum (strain ATCC 49652 / DSM 12025 / NBRC 103806 / TLS) (Chlorobium tepidum)).